Reading from the N-terminus, the 123-residue chain is Large ribosomal subunit protein bL17 (123 aa).

This sequence belongs to the bacterial ribosomal protein bL17 family. Part of the 50S ribosomal subunit. Contacts protein L32.

This is Large ribosomal subunit protein bL17 from Borreliella afzelii (strain PKo) (Borrelia afzelii).